The sequence spans 198 residues: Recombination protein RecR (198 aa).

The segment at 57–72 (CSICGRLTDDDPCSIC) adopts a C4-type zinc-finger fold. The region spanning 80 to 175 (TTILVLEDSR…KVTRLARGLA (96 aa)) is the Toprim domain.

It belongs to the RecR family.

Functionally, may play a role in DNA repair. It seems to be involved in an RecBC-independent recombinational process of DNA repair. It may act with RecF and RecO. The protein is Recombination protein RecR of Streptococcus pneumoniae serotype 2 (strain D39 / NCTC 7466).